A 141-amino-acid polypeptide reads, in one-letter code: Large ribosomal subunit protein uL11 (141 aa).

The protein belongs to the universal ribosomal protein uL11 family. In terms of assembly, part of the ribosomal stalk of the 50S ribosomal subunit. Interacts with L10 and the large rRNA to form the base of the stalk. L10 forms an elongated spine to which L12 dimers bind in a sequential fashion forming a multimeric L10(L12)X complex. One or more lysine residues are methylated.

In terms of biological role, forms part of the ribosomal stalk which helps the ribosome interact with GTP-bound translation factors. This is Large ribosomal subunit protein uL11 from Microcystis aeruginosa (strain NIES-843 / IAM M-2473).